Here is an 864-residue protein sequence, read N- to C-terminus: Leucine--tRNA ligase (864 aa).

The short motif at 42-52 (PYPSGKLHMGH) is the 'HIGH' region element. Positions 619-623 (KMSKS) match the 'KMSKS' region motif. Lys-622 contributes to the ATP binding site.

The protein belongs to the class-I aminoacyl-tRNA synthetase family.

It is found in the cytoplasm. It carries out the reaction tRNA(Leu) + L-leucine + ATP = L-leucyl-tRNA(Leu) + AMP + diphosphate. This is Leucine--tRNA ligase from Wigglesworthia glossinidia brevipalpis.